The chain runs to 608 residues: Dihydroxy-acid dehydratase, chloroplastic (608 aa).

The transit peptide at Met-1–Cys-34 directs the protein to the chloroplast. An N-acetylserine modification is found at Ser-35. A [2Fe-2S] cluster-binding site is contributed by Cys-100. Asp-132 is a Mg(2+) binding site. Cys-173 is a binding site for [2Fe-2S] cluster. Residue Asp-174 coordinates Mg(2+). A [2Fe-2S] cluster-binding site is contributed by Cys-245. Glu-497 contributes to the Mg(2+) binding site. The Proton acceptor role is filled by Ser-523.

The protein belongs to the IlvD/Edd family. The cofactor is [2Fe-2S] cluster. Mg(2+) is required as a cofactor.

It localises to the plastid. The protein localises to the chloroplast. The enzyme catalyses (2R)-2,3-dihydroxy-3-methylbutanoate = 3-methyl-2-oxobutanoate + H2O. It carries out the reaction (2R,3R)-2,3-dihydroxy-3-methylpentanoate = (S)-3-methyl-2-oxopentanoate + H2O. Its pathway is amino-acid biosynthesis; L-isoleucine biosynthesis; L-isoleucine from 2-oxobutanoate: step 3/4. It participates in amino-acid biosynthesis; L-valine biosynthesis; L-valine from pyruvate: step 3/4. Its activity is regulated as follows. Is highly competitively inhibited by the fungal sesquiterpenoid aspterric acid, which is effective as a herbicide in spray applications. Functionally, functions in the biosynthesis of branched-chain amino acids. Catalyzes the dehydration of (2R,3R)-2,3-dihydroxy-3-methylpentanoate (2,3-dihydroxy-3-methylvalerate) into 2-oxo-3-methylpentanoate (2-oxo-3-methylvalerate) and of (2R)-2,3-dihydroxy-3-methylbutanoate (2,3-dihydroxyisovalerate) into 2-oxo-3-methylbutanoate (2-oxoisovalerate), the penultimate precursor to L-isoleucine and L-valine, respectively. The sequence is that of Dihydroxy-acid dehydratase, chloroplastic from Arabidopsis thaliana (Mouse-ear cress).